The following is a 459-amino-acid chain: MSNYAIILAAGKGTRMKSDLPKVMHKVSGITMLEHVFRSVQAIEPSKIVTVIGHKAELVRDVLGDKSEFVMQTEQLGTGHAVMMAEEELATSKGHTLVIAGDTPLITGESLKNLIDFHVNHKNVATILTADAANPFGYGRIIRNSDDEVTKIVEQKDANDFEQQVKEINTGTYVFDNQSLFEALKDINTNNAQGEYYLTDVIGIFKEAGKKVGAYKLRDFDESLGVNDRVALATAEKVMRHRIARQHMVNGVTVVNPDSAYIDIDVEIGEESVIEPNVTLKGQTKIGKGTLLTNGSYLVDAQVGNDVTITNSMVEESIISDGVTVGPYAHIRPGTSLAKGVHIGNFVEVKGSQIGENTKAGHLTYIGNAEVGCDVNFGAGTITVNYDGQNKFKTEIGSNVFIGSNSTLIAPLEIGDNALTAAGSTITDNVPIDSIAIGRGRQVNKEGYANKKPHHPSQK.

The tract at residues 1–229 (MSNYAIILAA…FDESLGVNDR (229 aa)) is pyrophosphorylase. UDP-N-acetyl-alpha-D-glucosamine contacts are provided by residues 8–11 (LAAG), lysine 22, glutamine 72, and 77–78 (GT). A Mg(2+)-binding site is contributed by aspartate 102. 4 residues coordinate UDP-N-acetyl-alpha-D-glucosamine: glycine 139, glutamate 154, asparagine 169, and asparagine 227. Mg(2+) is bound at residue asparagine 227. Residues 230 to 250 (VALATAEKVMRHRIARQHMVN) form a linker region. Residues 251–459 (GVTVVNPDSA…NKKPHHPSQK (209 aa)) are N-acetyltransferase. The UDP-N-acetyl-alpha-D-glucosamine site is built by arginine 332 and lysine 350. Histidine 362 (proton acceptor) is an active-site residue. 2 residues coordinate UDP-N-acetyl-alpha-D-glucosamine: tyrosine 365 and asparagine 376. Residues alanine 379, 385-386 (NY), serine 404, alanine 422, and arginine 439 contribute to the acetyl-CoA site.

The protein in the N-terminal section; belongs to the N-acetylglucosamine-1-phosphate uridyltransferase family. This sequence in the C-terminal section; belongs to the transferase hexapeptide repeat family. As to quaternary structure, homotrimer. Requires Mg(2+) as cofactor.

Its subcellular location is the cytoplasm. It carries out the reaction alpha-D-glucosamine 1-phosphate + acetyl-CoA = N-acetyl-alpha-D-glucosamine 1-phosphate + CoA + H(+). The catalysed reaction is N-acetyl-alpha-D-glucosamine 1-phosphate + UTP + H(+) = UDP-N-acetyl-alpha-D-glucosamine + diphosphate. It participates in nucleotide-sugar biosynthesis; UDP-N-acetyl-alpha-D-glucosamine biosynthesis; N-acetyl-alpha-D-glucosamine 1-phosphate from alpha-D-glucosamine 6-phosphate (route II): step 2/2. Its pathway is nucleotide-sugar biosynthesis; UDP-N-acetyl-alpha-D-glucosamine biosynthesis; UDP-N-acetyl-alpha-D-glucosamine from N-acetyl-alpha-D-glucosamine 1-phosphate: step 1/1. The protein operates within bacterial outer membrane biogenesis; LPS lipid A biosynthesis. Functionally, catalyzes the last two sequential reactions in the de novo biosynthetic pathway for UDP-N-acetylglucosamine (UDP-GlcNAc). The C-terminal domain catalyzes the transfer of acetyl group from acetyl coenzyme A to glucosamine-1-phosphate (GlcN-1-P) to produce N-acetylglucosamine-1-phosphate (GlcNAc-1-P), which is converted into UDP-GlcNAc by the transfer of uridine 5-monophosphate (from uridine 5-triphosphate), a reaction catalyzed by the N-terminal domain. In Streptococcus agalactiae serotype V (strain ATCC BAA-611 / 2603 V/R), this protein is Bifunctional protein GlmU.